The primary structure comprises 553 residues: Fusion glycoprotein F0 (553 aa).

The first 31 residues, methionine 1–serine 31, serve as a signal peptide directing secretion. The Extracellular segment spans residues serine 31–alanine 500. 5 disulfides stabilise this stretch: cysteine 76–cysteine 199, cysteine 338–cysteine 347, cysteine 362–cysteine 370, cysteine 394–cysteine 399, and cysteine 401–cysteine 424. Asparagine 85 and asparagine 191 each carry an N-linked (GlcNAc...) asparagine; by host glycan. Residue asparagine 366 is glycosylated (N-linked (GlcNAc...) asparagine; by host). Asparagine 447 and asparagine 471 each carry an N-linked (GlcNAc...) asparagine; by host glycan. A coiled-coil region spans residues isoleucine 463–serine 499. A helical membrane pass occupies residues leucine 501–leucine 521. Topologically, residues alanine 522–methionine 553 are cytoplasmic. Cysteine 523 carries S-palmitoyl cysteine; by host lipidation.

Belongs to the paramyxoviruses fusion glycoprotein family. In terms of assembly, homotrimer of disulfide-linked F1-F2. In terms of processing, the inactive precursor F0 is glycosylated and proteolytically cleaved into F1 and F2 to be functionally active. The cleavage is mediated by cellular proteases during the transport and maturation of the polypeptide.

It localises to the virion membrane. The protein resides in the host cell membrane. Its function is as follows. Class I viral fusion protein. Under the current model, the protein has at least 3 conformational states: pre-fusion native state, pre-hairpin intermediate state, and post-fusion hairpin state. During viral and plasma cell membrane fusion, the heptad repeat (HR) regions assume a trimer-of-hairpins structure, positioning the fusion peptide in close proximity to the C-terminal region of the ectodomain. The formation of this structure appears to drive apposition and subsequent fusion of viral and plasma cell membranes. Directs fusion of viral and cellular membranes leading to delivery of the nucleocapsid into the cytoplasm. This fusion is pH independent and occurs directly at the outer cell membrane. The trimer of F1-F2 (F protein) probably interacts with HN at the virion surface. Upon HN binding to its cellular receptor, the hydrophobic fusion peptide is unmasked and interacts with the cellular membrane, inducing the fusion between cell and virion membranes. Later in infection, F proteins expressed at the plasma membrane of infected cells could mediate fusion with adjacent cells to form syncytia, a cytopathic effect that could lead to tissue necrosis. The protein is Fusion glycoprotein F0 (F) of Gallus gallus (Chicken).